The sequence spans 448 residues: Phosphoglucosamine mutase (448 aa).

The active-site Phosphoserine intermediate is the Ser104. 4 residues coordinate Mg(2+): Ser104, Asp245, Asp247, and Asp249. A Phosphoserine modification is found at Ser104.

This sequence belongs to the phosphohexose mutase family. Requires Mg(2+) as cofactor. Activated by phosphorylation.

It carries out the reaction alpha-D-glucosamine 1-phosphate = D-glucosamine 6-phosphate. Functionally, catalyzes the conversion of glucosamine-6-phosphate to glucosamine-1-phosphate. This Caulobacter vibrioides (strain ATCC 19089 / CIP 103742 / CB 15) (Caulobacter crescentus) protein is Phosphoglucosamine mutase.